The following is a 160-amino-acid chain: SsrA-binding protein (160 aa).

The protein belongs to the SmpB family.

Its subcellular location is the cytoplasm. Required for rescue of stalled ribosomes mediated by trans-translation. Binds to transfer-messenger RNA (tmRNA), required for stable association of tmRNA with ribosomes. tmRNA and SmpB together mimic tRNA shape, replacing the anticodon stem-loop with SmpB. tmRNA is encoded by the ssrA gene; the 2 termini fold to resemble tRNA(Ala) and it encodes a 'tag peptide', a short internal open reading frame. During trans-translation Ala-aminoacylated tmRNA acts like a tRNA, entering the A-site of stalled ribosomes, displacing the stalled mRNA. The ribosome then switches to translate the ORF on the tmRNA; the nascent peptide is terminated with the 'tag peptide' encoded by the tmRNA and targeted for degradation. The ribosome is freed to recommence translation, which seems to be the essential function of trans-translation. The protein is SsrA-binding protein of Chloroflexus aurantiacus (strain ATCC 29364 / DSM 637 / Y-400-fl).